The sequence spans 96 residues: Nucleoid-associated protein DR_0199 (96 aa).

It belongs to the YbaB/EbfC family. As to quaternary structure, homodimer.

It is found in the cytoplasm. The protein resides in the nucleoid. Its function is as follows. Binds to DNA and alters its conformation. May be involved in regulation of gene expression, nucleoid organization and DNA protection. This chain is Nucleoid-associated protein DR_0199, found in Deinococcus radiodurans (strain ATCC 13939 / DSM 20539 / JCM 16871 / CCUG 27074 / LMG 4051 / NBRC 15346 / NCIMB 9279 / VKM B-1422 / R1).